The sequence spans 405 residues: Type II secretion system protein F (405 aa).

At methionine 1–asparagine 169 the chain is on the cytoplasmic side. Residues aspartate 98, glutamine 151, and aspartate 155 each coordinate Ca(2+). Residues alanine 170–glycine 190 form a helical membrane-spanning segment. The Periplasmic portion of the chain corresponds to tyrosine 191–glycine 218. The helical transmembrane segment at leucine 219–leucine 239 threads the bilayer. The Cytoplasmic portion of the chain corresponds to aspartate 240–alanine 370. Residues leucine 371 to isoleucine 391 traverse the membrane as a helical segment. Residues serine 392 to glycine 405 lie on the Periplasmic side of the membrane.

This sequence belongs to the GSP F family. In terms of assembly, type II secretion system is composed of four main components: the outer membrane complex, the inner membrane complex, the cytoplasmic secretion ATPase and the periplasm-spanning pseudopilus. Homodimer. Interacts with XpsE and XpsL components.

The protein localises to the cell inner membrane. Its function is as follows. Component of the type II secretion system inner membrane complex required for the energy-dependent secretion of extracellular factors such as proteases and toxins from the periplasm. The polypeptide is Type II secretion system protein F (xpsF) (Xanthomonas campestris pv. campestris (strain ATCC 33913 / DSM 3586 / NCPPB 528 / LMG 568 / P 25)).